Here is a 781-residue protein sequence, read N- to C-terminus: ATP-dependent 6-phosphofructokinase (781 aa).

An N-terminal catalytic PFK domain 1 region spans residues M1–K394. Residues G27, R90–C91, and G120–S123 each bind ATP. D121 contributes to the Mg(2+) binding site. Substrate is bound by residues S166 to D168, R203, M210 to R212, E266, R294, and H300 to R303. The active-site Proton acceptor is the D168. Residues I395–L409 are interdomain linker. The interval R410 to K781 is C-terminal regulatory PFK domain 2. Beta-D-fructose 2,6-bisphosphate is bound by residues R479, T537 to N541, R575, M582 to G584, D638, R664, H670 to Q673, and R745.

It belongs to the phosphofructokinase type A (PFKA) family. ATP-dependent PFK group I subfamily. Eukaryotic two domain clade 'E' sub-subfamily. In terms of assembly, homotetramer. Mg(2+) is required as a cofactor.

Its subcellular location is the cytoplasm. It catalyses the reaction beta-D-fructose 6-phosphate + ATP = beta-D-fructose 1,6-bisphosphate + ADP + H(+). It functions in the pathway carbohydrate degradation; glycolysis; D-glyceraldehyde 3-phosphate and glycerone phosphate from D-glucose: step 3/4. Allosterically activated by ADP, AMP, or fructose 2,6-bisphosphate, and allosterically inhibited by ATP or citrate. Functionally, catalyzes the phosphorylation of D-fructose 6-phosphate to fructose 1,6-bisphosphate by ATP, the first committing step of glycolysis. This is ATP-dependent 6-phosphofructokinase (PFK) from Schistosoma mansoni (Blood fluke).